The following is a 276-amino-acid chain: Expansin-like A3 (276 aa).

Positions 1–28 (MAVLLSILSSSFLLLLAASSSSTPRASA) are cleaved as a signal peptide. One can recognise an Expansin-like EG45 domain in the interval 52 to 158 (GGGCGYGAMA…RRIPCDYKDK (107 aa)). Asn115 and Asn159 each carry an N-linked (GlcNAc...) asparagine glycan. The 84-residue stretch at 172-255 (NNLVIKFLYQ…NWQPGQVYDT (84 aa)) folds into the Expansin-like CBD domain.

The protein belongs to the expansin family. Expansin-like A subfamily.

It localises to the secreted. The chain is Expansin-like A3 (EXLA3) from Oryza sativa subsp. japonica (Rice).